The primary structure comprises 151 residues: Phosphopantetheine adenylyltransferase (151 aa).

Ser9 contributes to the substrate binding site. Residues 9-10 and His17 contribute to the ATP site; that span reads SF. Positions 41, 73, and 87 each coordinate substrate. ATP contacts are provided by residues 88-90, Glu98, and 122-128; these read GLR and TSFISSS.

It belongs to the bacterial CoaD family. Homohexamer. Mg(2+) serves as cofactor.

Its subcellular location is the cytoplasm. It catalyses the reaction (R)-4'-phosphopantetheine + ATP + H(+) = 3'-dephospho-CoA + diphosphate. It participates in cofactor biosynthesis; coenzyme A biosynthesis; CoA from (R)-pantothenate: step 4/5. In terms of biological role, reversibly transfers an adenylyl group from ATP to 4'-phosphopantetheine, yielding dephospho-CoA (dPCoA) and pyrophosphate. This is Phosphopantetheine adenylyltransferase from Flavobacterium psychrophilum (strain ATCC 49511 / DSM 21280 / CIP 103535 / JIP02/86).